A 214-amino-acid polypeptide reads, in one-letter code: Dephospho-CoA kinase (214 aa).

One can recognise a DPCK domain in the interval 3 to 202; it reads KIGLTGGIGS…DRWLALAGAA (200 aa). 11–16 contacts ATP; it reads GSGKSR.

This sequence belongs to the CoaE family.

The protein resides in the cytoplasm. It catalyses the reaction 3'-dephospho-CoA + ATP = ADP + CoA + H(+). The protein operates within cofactor biosynthesis; coenzyme A biosynthesis; CoA from (R)-pantothenate: step 5/5. In terms of biological role, catalyzes the phosphorylation of the 3'-hydroxyl group of dephosphocoenzyme A to form coenzyme A. This Bordetella bronchiseptica (strain ATCC BAA-588 / NCTC 13252 / RB50) (Alcaligenes bronchisepticus) protein is Dephospho-CoA kinase.